Reading from the N-terminus, the 437-residue chain is Ribosomal protein uS12 methylthiotransferase RimO (437 aa).

The 116-residue stretch at lysine 3–proline 118 folds into the MTTase N-terminal domain. Cysteine 12, cysteine 48, cysteine 81, cysteine 157, cysteine 161, and cysteine 164 together coordinate [4Fe-4S] cluster. Residues asparagine 143 to glutamate 370 enclose the Radical SAM core domain. Residues glutamate 373–valine 437 enclose the TRAM domain.

This sequence belongs to the methylthiotransferase family. RimO subfamily. The cofactor is [4Fe-4S] cluster.

The protein resides in the cytoplasm. It carries out the reaction L-aspartate(89)-[ribosomal protein uS12]-hydrogen + (sulfur carrier)-SH + AH2 + 2 S-adenosyl-L-methionine = 3-methylsulfanyl-L-aspartate(89)-[ribosomal protein uS12]-hydrogen + (sulfur carrier)-H + 5'-deoxyadenosine + L-methionine + A + S-adenosyl-L-homocysteine + 2 H(+). In terms of biological role, catalyzes the methylthiolation of an aspartic acid residue of ribosomal protein uS12. The polypeptide is Ribosomal protein uS12 methylthiotransferase RimO (Leptospira interrogans serogroup Icterohaemorrhagiae serovar Lai (strain 56601)).